The sequence spans 634 residues: Sodium-dependent neutral amino acid transporter B(0)AT1 (634 aa).

Residues 1–41 (MVRLVLPNPGLDTRILSLAELETIEQEEASSRPKWDNKAQY) are Cytoplasmic-facing. S17 bears the Phosphoserine mark. A helical membrane pass occupies residues 42-62 (LLTCVGFCVGLGNVWRFPYLC). The Extracellular segment spans residues 63-65 (QSH). A helical transmembrane segment spans residues 66 to 86 (GGGAFMIPFLILLVLEGIPLL). Over 87–120 (HLEFAIGQRLRRGSLGVWSSIHPALKGVGLTSML) the chain is Cytoplasmic. Residues 121-141 (VSFVVGLYYNTIISWIMWYLF) traverse the membrane as a helical segment. The Extracellular portion of the chain corresponds to 142 to 192 (NSFQEPLPWSECPLNENQTGYVDECARSSPVDYFWYRETLNISTSISDSGS). 2 N-linked (GlcNAc...) asparagine glycosylation sites follow: N158 and N182. A helical transmembrane segment spans residues 193 to 213 (IQWRMLLCLACAWSVLYMCTI). Over 214 to 221 (RGIETTGK) the chain is Cytoplasmic. A helical transmembrane segment spans residues 222–242 (VVYITSTLPYVVLTIFLIRGL). Residues 243-268 (TLKGATKGIIYLFTPNVTELANPVTW) are Extracellular-facing. N258 carries an N-linked (GlcNAc...) asparagine glycan. A helical membrane pass occupies residues 269 to 289 (LDAGAQVFFSFSLAFGGLISF). At 290-304 (SSYNSVHNNCERDSV) the chain is on the cytoplasmic side. Residues 305 to 325 (IVSIINGFTSVYVAIVIYSII) traverse the membrane as a helical segment. Residues 326–413 (GFRATQRYDD…TEAITKMPVS (88 aa)) lie on the Extracellular side of the membrane. 2 N-linked (GlcNAc...) asparagine glycosylation sites follow: N354 and N368. A helical membrane pass occupies residues 414 to 434 (PLWSVLFFIMLFCLGLSSMFG). Residues 435–456 (NMEGVVVPLQDLKVIPPKWPKE) are Cytoplasmic-facing. Residues 457-477 (LLTGLICLGTFLIGFIFTLNS) form a helical membrane-spanning segment. Residues 478–487 (GQYWLSLLDS) lie on the Extracellular side of the membrane. A helical membrane pass occupies residues 488 to 508 (YAVSIPLLIIAFCEMFSVVYV). The Cytoplasmic segment spans residues 509 to 531 (YGVDRFNKDIEFMIGHKPNIFWQ). The helical transmembrane segment at 532–552 (VTWRVVSPLLMLIILVFFFVV) threads the bilayer. The Extracellular portion of the chain corresponds to 553-581 (QVSQELTYSIWNPGYEEFPKSQKISHPNW). A helical transmembrane segment spans residues 582–602 (VYAVVVIVAGVPSLTIPSYAI). Residues 603–634 (YKLIRNCCQKPGDRQGLVSTLSTASMNGDLKY) lie on the Cytoplasmic side of the membrane. At S627 the chain carries Phosphoserine.

Belongs to the sodium:neurotransmitter symporter (SNF) (TC 2.A.22) family. SLC6A19 subfamily. As to quaternary structure, interacts in a tissue-specific manner with ACE2 in small intestine and with CLTRN in the kidney. Interacts with CLTRN; this interaction is required for trafficking of SLC6A19 to the plasma membrane and for its catalytic activation in kidneys. Interacts with ACE2; this interaction is required for trafficking of SLC6A19 to the plasma membrane and for its catalytic activation in intestine. Interacts with ANPEP; the interaction positively regulates its amino acid transporter activity.

It localises to the membrane. The catalysed reaction is L-alanine(in) + Na(+)(in) = L-alanine(out) + Na(+)(out). It carries out the reaction L-cysteine(in) + Na(+)(in) = L-cysteine(out) + Na(+)(out). It catalyses the reaction L-glutamine(in) + Na(+)(in) = L-glutamine(out) + Na(+)(out). The enzyme catalyses glycine(in) + Na(+)(in) = glycine(out) + Na(+)(out). The catalysed reaction is L-isoleucine(in) + Na(+)(in) = L-isoleucine(out) + Na(+)(out). It carries out the reaction L-leucine(in) + Na(+)(in) = L-leucine(out) + Na(+)(out). It catalyses the reaction L-methionine(in) + Na(+)(in) = L-methionine(out) + Na(+)(out). The enzyme catalyses L-phenylalanine(in) + Na(+)(in) = L-phenylalanine(out) + Na(+)(out). The catalysed reaction is L-serine(in) + Na(+)(in) = L-serine(out) + Na(+)(out). It carries out the reaction L-tryptophan(in) + Na(+)(in) = L-tryptophan(out) + Na(+)(out). It catalyses the reaction L-tyrosine(in) + Na(+)(in) = L-tyrosine(out) + Na(+)(out). The enzyme catalyses L-valine(in) + Na(+)(in) = L-valine(out) + Na(+)(out). In terms of biological role, transporter that mediates resorption of neutral amino acids across the apical membrane of renal and intestinal epithelial cells. This uptake is sodium-dependent and chloride-independent. Requires CLTRN in kidney or ACE2 in intestine for cell surface expression and amino acid transporter activity. This is Sodium-dependent neutral amino acid transporter B(0)AT1 (SLC6A19) from Pongo abelii (Sumatran orangutan).